We begin with the raw amino-acid sequence, 152 residues long: Sec-independent protein translocase protein TatB (152 aa).

A helical membrane pass occupies residues 1–21 (MFDLGWSELLVIGVVALIVVG).

The protein belongs to the TatB family. In terms of assembly, the Tat system comprises two distinct complexes: a TatABC complex, containing multiple copies of TatA, TatB and TatC subunits, and a separate TatA complex, containing only TatA subunits. Substrates initially bind to the TatABC complex, which probably triggers association of the separate TatA complex to form the active translocon.

It is found in the cell inner membrane. Part of the twin-arginine translocation (Tat) system that transports large folded proteins containing a characteristic twin-arginine motif in their signal peptide across membranes. Together with TatC, TatB is part of a receptor directly interacting with Tat signal peptides. TatB may form an oligomeric binding site that transiently accommodates folded Tat precursor proteins before their translocation. This is Sec-independent protein translocase protein TatB from Ruegeria pomeroyi (strain ATCC 700808 / DSM 15171 / DSS-3) (Silicibacter pomeroyi).